A 359-amino-acid polypeptide reads, in one-letter code: Agropine synthesis conjugase (359 aa).

The 144-residue stretch at 28–171 folds into the SIS domain; the sequence is TVAKFGRATA…IGGILNEREN (144 aa).

The polypeptide is Agropine synthesis conjugase (mas2) (Rhizobium rhizogenes (Agrobacterium rhizogenes)).